The primary structure comprises 121 residues: Protein SNORC (121 aa).

The first 24 residues, 1–24 (MASCLALRVALLLISGVLAPAVLT), serve as a signal peptide directing secretion. The Extracellular portion of the chain corresponds to 25–92 (AEGPQEPDPT…QDGGSLGPGA (68 aa)). A disordered region spans residues 26–84 (EGPQEPDPTLWNEPIELPSGEGPLESTSHNQEFAVSGPPFPTSAPAPEDSTPPARVDQD). A helical transmembrane segment spans residues 93-113 (IAAIVIAALLATCVVLALVVV). The Cytoplasmic segment spans residues 114–121 (ALRKFSAS).

As to quaternary structure, interacts (via the extracellular domain) with FGF2. Expressed only in cartilage, including nasal, knee epiphyseal and rib tissues. In proliferation and hypertrophic chondrocytes, detected intracellulary and in the pericellular extracellular matrix. In primary spongiosa, detected only in the extracellular matrix.

It is found in the membrane. The protein localises to the cytoplasm. Its subcellular location is the secreted. The protein resides in the extracellular space. It localises to the extracellular matrix. Functionally, plays a role in the regulation of chondrocyte maturation and postnatal endochondral ossification. May inhibit cell growth stimulation induced by FGF2. The protein is Protein SNORC of Mus musculus (Mouse).